The chain runs to 244 residues: INO80 complex subunit E (244 aa).

Residues 10–54 (DYKKKYRNLKRKLKFLIYEHECFQEELRKAQRKLLKVSRDKSFLL) are a coiled coil. Residues 63 to 236 (VDEDSSDSDA…SGDDALDGDD (174 aa)) are disordered. Over residues 99-115 (PPLGGAPSPSSLSLPPS) the composition is skewed to low complexity. A compositionally biased stretch (basic residues) spans 157–171 (RPKREKRPRLPRKLK). Residues K159 and K171 each participate in a glycyl lysine isopeptide (Lys-Gly) (interchain with G-Cter in SUMO2) cross-link. The segment covering 202 to 212 (PLPPPKMPPPT) has biased composition (pro residues).

In terms of assembly, component of the chromatin remodeling INO80 complex; specifically part of a complex module associated with the N-terminus of INO80.

The protein localises to the nucleus. In terms of biological role, putative regulatory component of the chromatin remodeling INO80 complex which is involved in transcriptional regulation, DNA replication and probably DNA repair. The sequence is that of INO80 complex subunit E (INO80E) from Homo sapiens (Human).